Reading from the N-terminus, the 951-residue chain is Translation initiation factor IF-2 (951 aa).

Disordered regions lie at residues 58 to 255 and 305 to 329; these read AERK…AVVI and DVSR…KSLS. The segment covering 101-170 has biased composition (low complexity); that stretch reads AEPQYAEPQQ…PQAQPAQPAA (70 aa). Pro residues predominate over residues 171-216; sequence PVAPPAPSAQPSAPQPPAAQPRPPQPPMPSRPPPAGYRPAPPPGAR. The span at 217–234 shows a compositional bias: low complexity; the sequence is PPMSAAPGAPAQPGAAGQ. The tr-type G domain maps to 450–619; the sequence is IRPPVVTVMG…ALQSEVLELK (170 aa). Positions 459 to 466 are G1; that stretch reads GHVDHGKT. GTP is bound at residue 459–466; sequence GHVDHGKT. Residues 484 to 488 are G2; it reads GITQH. The tract at residues 505–508 is G3; sequence DTPG. GTP is bound by residues 505–509 and 559–562; these read DTPGH and NKVD. The tract at residues 559–562 is G4; sequence NKVD. Residues 595–597 are G5; it reads SAR.

The protein belongs to the TRAFAC class translation factor GTPase superfamily. Classic translation factor GTPase family. IF-2 subfamily.

The protein localises to the cytoplasm. One of the essential components for the initiation of protein synthesis. Protects formylmethionyl-tRNA from spontaneous hydrolysis and promotes its binding to the 30S ribosomal subunits. Also involved in the hydrolysis of GTP during the formation of the 70S ribosomal complex. This is Translation initiation factor IF-2 from Anaeromyxobacter dehalogenans (strain 2CP-1 / ATCC BAA-258).